We begin with the raw amino-acid sequence, 199 residues long: NAD(P)H dehydrogenase (quinone) (199 aa).

The 187-residue stretch at 4–190 (VLVLYYSSWG…DGARFQGRHV (187 aa)) folds into the Flavodoxin-like domain. Residues 10-15 (SSWGHV) and 78-80 (TRY) each bind FMN. Position 12 (Trp12) interacts with NAD(+). Residue Trp98 coordinates substrate. FMN-binding positions include 113–119 (STASQHG) and His134.

This sequence belongs to the WrbA family. FMN is required as a cofactor.

It catalyses the reaction a quinone + NADH + H(+) = a quinol + NAD(+). The catalysed reaction is a quinone + NADPH + H(+) = a quinol + NADP(+). The sequence is that of NAD(P)H dehydrogenase (quinone) from Methylorubrum extorquens (strain CM4 / NCIMB 13688) (Methylobacterium extorquens).